The following is a 351-amino-acid chain: Photosystem II D2 protein (351 aa).

Residues Cys-39 to Thr-59 form a helical membrane-spanning segment. His-116 lines the chlorophyll a pocket. The chain crosses the membrane as a helical span at residues Gly-123–Pro-139. Pheophytin a-binding residues include Gln-128 and Asn-141. Residues Val-151–Ser-164 form a helical membrane-spanning segment. His-196 serves as a coordination point for chlorophyll a. The chain crosses the membrane as a helical span at residues Gly-206–Glu-226. Positions 213 and 260 each coordinate a plastoquinone. His-213 contacts Fe cation. His-267 contacts Fe cation. Residues Gly-277–Arg-293 form a helical membrane-spanning segment.

This sequence belongs to the reaction center PufL/M/PsbA/D family. In terms of assembly, PSII is composed of 1 copy each of membrane proteins PsbA, PsbB, PsbC, PsbD, PsbE, PsbF, PsbH, PsbI, PsbJ, PsbK, PsbL, PsbM, PsbT, PsbX, PsbY, PsbZ, Psb30/Ycf12, peripheral proteins PsbO, CyanoQ (PsbQ), PsbU, PsbV and a large number of cofactors. It forms dimeric complexes. The D1/D2 heterodimer binds P680, chlorophylls that are the primary electron donor of PSII, and subsequent electron acceptors. It shares a non-heme iron and each subunit binds pheophytin, quinone, additional chlorophylls, carotenoids and lipids. There is also a Cl(-1) ion associated with D1 and D2, which is required for oxygen evolution. The PSII complex binds additional chlorophylls, carotenoids and specific lipids. serves as cofactor.

It is found in the cellular thylakoid membrane. The enzyme catalyses 2 a plastoquinone + 4 hnu + 2 H2O = 2 a plastoquinol + O2. In terms of biological role, photosystem II (PSII) is a light-driven water:plastoquinone oxidoreductase that uses light energy to abstract electrons from H(2)O, generating O(2) and a proton gradient subsequently used for ATP formation. It consists of a core antenna complex that captures photons, and an electron transfer chain that converts photonic excitation into a charge separation. The D1/D2 (PsbA/PsbD) reaction center heterodimer binds P680, the primary electron donor of PSII as well as several subsequent electron acceptors. D2 is needed for assembly of a stable PSII complex. In Crocosphaera subtropica (strain ATCC 51142 / BH68) (Cyanothece sp. (strain ATCC 51142)), this protein is Photosystem II D2 protein.